The sequence spans 353 residues: Endophilin-A1 (353 aa).

Positions 1–21 are membrane-binding amphipathic helix; the sequence is MSVAGLKKQFHKATQKVSEKV. A disordered region spans residues 1–27; that stretch reads MSVAGLKKQFHKATQKVSEKVGGAEGT. The segment at 1 to 125 is binds and tubulates liposomes; the sequence is MSVAGLKKQF…DVGEAMKELS (125 aa). The BAR domain maps to 18–249; the sequence is SEKVGGAEGT…LEDRIKEASS (232 aa). A required for dimerization upon membrane association region spans residues 60-87; that stretch reads PNPASRAKLSMINTMSKIRGQEKGPGYP. A coiled-coil region spans residues 181 to 201; that stretch reads EELRQALEKFDESKEIAESSM. A compositionally biased stretch (basic and acidic residues) spans 243–257; the sequence is RIKEASSQPKREYQP. Residues 243–290 are disordered; it reads RIKEASSQPKREYQPKPRMSLDFTSGGDNTQHNGGISHATTPKPAGAH. Positions 264–282 are enriched in polar residues; the sequence is DFTSGGDNTQHNGGISHAT. Residues 291–350 enclose the SH3 domain; the sequence is MDQPCCRALYDFEPENEGELGFKEGDIITLTNQIDENWYEGMLHGQSGFFPINYVDILVP.

Belongs to the endophilin family. As to quaternary structure, monomer; in cytoplasm. Homodimer; when associated with membranes. Associates with MAP4K3. This interaction appears to regulate MAP4K3-mediated JNK activation. Interacts with SYNJ1 and DNM1. Highly expressed in brain.

Its subcellular location is the cytoplasm. The protein localises to the membrane. It localises to the early endosome. The protein resides in the presynapse. Its function is as follows. Implicated in synaptic vesicle endocytosis. May recruit other proteins to membranes with high curvature. This Gallus gallus (Chicken) protein is Endophilin-A1.